Reading from the N-terminus, the 336-residue chain is F420-dependent glucose-6-phosphate dehydrogenase (336 aa).

D39 serves as a coordination point for coenzyme F420-(gamma-Glu)n. The active-site Proton donor is H40. Residues T76 and 107–108 each bind coenzyme F420-(gamma-Glu)n; that span reads TG. The active-site Proton acceptor is the E109. Coenzyme F420-(gamma-Glu)n-binding positions include N112, 177-178, and 180-181; these read GG and VV. Substrate is bound by residues T195, K198, K259, and R283.

This sequence belongs to the F420-dependent glucose-6-phosphate dehydrogenase family. As to quaternary structure, homodimer.

It carries out the reaction oxidized coenzyme F420-(gamma-L-Glu)(n) + D-glucose 6-phosphate + H(+) = 6-phospho-D-glucono-1,5-lactone + reduced coenzyme F420-(gamma-L-Glu)(n). In terms of biological role, catalyzes the coenzyme F420-dependent oxidation of glucose 6-phosphate (G6P) to 6-phosphogluconolactone. Appears to have a role in resistance to oxidative stress, via its consumption of G6P that serves as a source of reducing power to combat oxidative stress in mycobacteria. Cannot use NAD, NADP, FAD or FMN instead of coenzyme F420 as an electron acceptor. Exhibits nearly no activity with D-mannose-6-phosphate or D-fructose-6-phosphate as substrate. The chain is F420-dependent glucose-6-phosphate dehydrogenase (fgd) from Mycolicibacterium smegmatis (strain ATCC 700084 / mc(2)155) (Mycobacterium smegmatis).